The primary structure comprises 275 residues: Putative replication protein (275 aa).

Residues serine 98–phenylalanine 198 form the BRCT domain.

The protein is Putative replication protein of Wigglesworthia glossinidia brevipalpis.